The following is a 219-amino-acid chain: Ras-related protein Rab-3B (219 aa).

A2 bears the N-acetylalanine mark. Residues S31, S32, V33, G34, K35, T36, S37, P49, and S53 each coordinate GTP. Mg(2+) is bound at residue T36. The Switch 1 motif lies at 45–58 (DTFTPAFVSTVGID). The Mg(2+) site is built by T54 and D77. The short motif at 78–96 (TAGQERYRTITTAYYRGAM) is the Switch 2 element. G80 provides a ligand contact to GTP. Residue T86 is modified to Phosphothreonine. Residues N135, K136, D138, A166, and K167 each contribute to the GTP site. 2 positions are modified to phosphoserine: S188 and S190. S-geranylgeranyl cysteine attachment occurs at residues C217 and C219. Position 219 is a cysteine methyl ester (C219).

This sequence belongs to the small GTPase superfamily. Rab family. Interacts with RPH3A and RPH3AL. Interacts with RIMS1. Interacts with RIMS2. The GTP-bound form interacts with GAS8/DRC4 (via coiled-coil domains). Interacts with GDI2, and CHM; phosphorylation at Thr-86 disrupts these interactions. Interacts with MADD (via uDENN domain); the GTP-bound form is preferred for interaction. The cofactor is Mg(2+). In terms of processing, phosphorylation of Thr-86 in the switch II region by LRRK2 prevents the association of RAB regulatory proteins, including CHM and RAB GDP dissociation inhibitor GDI2.

Its subcellular location is the cell membrane. The protein resides in the golgi apparatus. The catalysed reaction is GTP + H2O = GDP + phosphate + H(+). Its activity is regulated as follows. Regulated by guanine nucleotide exchange factors (GEFs) which promote the exchange of bound GDP for free GTP. Regulated by GTPase activating proteins (GAPs) which increase the GTP hydrolysis activity. Inhibited by GDP dissociation inhibitors (GDIs) which prevent Rab-GDP dissociation. Functionally, the small GTPases Rab are key regulators of intracellular membrane trafficking, from the formation of transport vesicles to their fusion with membranes. Rabs cycle between an inactive GDP-bound form and an active GTP-bound form that is able to recruit to membranes different sets of downstream effectors directly responsible for vesicle formation, movement, tethering and fusion. The chain is Ras-related protein Rab-3B from Rattus norvegicus (Rat).